The following is a 368-amino-acid chain: Cytochrome P450 119 (368 aa).

Residues H76, R80, T257, R259, H315, and C317 each contribute to the heme site.

It belongs to the cytochrome P450 family. It depends on heme as a cofactor.

The protein localises to the cytoplasm. It carries out the reaction 2 a phenolic donor + H2O2 = 2 a phenolic radical donor + 2 H2O. The endogenous substrate is not known. In vitro, catalyzes the H(2)O(2)-dependent epoxidation of styrene, cis-beta-methylstyrene, and cis-stilbene with retention of stereochemistry. Is able to use cumene hydroperoxide (CHP) or tert-butyl hydroperoxide (TBHP) instead of H(2)O(2) as the electron acceptor. Can also hydroxylate fatty acids such as lauric acid. The protein is Cytochrome P450 119 (cyp119) of Sulfolobus acidocaldarius (strain ATCC 33909 / DSM 639 / JCM 8929 / NBRC 15157 / NCIMB 11770).